A 1060-amino-acid polypeptide reads, in one-letter code: Carbamoyl phosphate synthase large chain (1060 aa).

The segment at 1–401 (MPKRTDIKKI…SLLKAVRSLE (401 aa)) is carboxyphosphate synthetic domain. ATP-binding residues include arginine 129, arginine 169, glycine 175, glycine 176, lysine 208, isoleucine 210, glutamate 215, glycine 241, isoleucine 242, histidine 243, glutamine 284, and glutamate 298. One can recognise an ATP-grasp 1 domain in the interval 133–327 (KQLMEELEQP…IAKLAAKIAV (195 aa)). Residues glutamine 284, glutamate 298, and asparagine 300 each contribute to the Mg(2+) site. Mn(2+) contacts are provided by glutamine 284, glutamate 298, and asparagine 300. The oligomerization domain stretch occupies residues 402–546 (IGAYHNELAE…YSTYEVENES (145 aa)). The carbamoyl phosphate synthetic domain stretch occupies residues 547-929 (NVSKKPSVLV…ALYKAFEASG (383 aa)). The ATP-grasp 2 domain occupies 671–861 (EQALQELAIP…MAQVATKAIL (191 aa)). Residues arginine 707, serine 746, leucine 748, glutamate 752, glycine 777, valine 778, histidine 779, serine 780, glutamine 820, and glutamate 832 each contribute to the ATP site. Mg(2+) contacts are provided by glutamine 820, glutamate 832, and asparagine 834. 3 residues coordinate Mn(2+): glutamine 820, glutamate 832, and asparagine 834. Residues 930–1060 (LHLPSYGAVL…ESRAFTTEAI (131 aa)) form the MGS-like domain. Residues 930-1060 (LHLPSYGAVL…ESRAFTTEAI (131 aa)) form an allosteric domain region.

Belongs to the CarB family. As to quaternary structure, composed of two chains; the small (or glutamine) chain promotes the hydrolysis of glutamine to ammonia, which is used by the large (or ammonia) chain to synthesize carbamoyl phosphate. Tetramer of heterodimers (alpha,beta)4. The cofactor is Mg(2+). Requires Mn(2+) as cofactor.

It catalyses the reaction hydrogencarbonate + L-glutamine + 2 ATP + H2O = carbamoyl phosphate + L-glutamate + 2 ADP + phosphate + 2 H(+). The enzyme catalyses hydrogencarbonate + NH4(+) + 2 ATP = carbamoyl phosphate + 2 ADP + phosphate + 2 H(+). Its pathway is amino-acid biosynthesis; L-arginine biosynthesis; carbamoyl phosphate from bicarbonate: step 1/1. It functions in the pathway pyrimidine metabolism; UMP biosynthesis via de novo pathway; (S)-dihydroorotate from bicarbonate: step 1/3. Its function is as follows. Large subunit of the glutamine-dependent carbamoyl phosphate synthetase (CPSase). CPSase catalyzes the formation of carbamoyl phosphate from the ammonia moiety of glutamine, carbonate, and phosphate donated by ATP, constituting the first step of 2 biosynthetic pathways, one leading to arginine and/or urea and the other to pyrimidine nucleotides. The large subunit (synthetase) binds the substrates ammonia (free or transferred from glutamine from the small subunit), hydrogencarbonate and ATP and carries out an ATP-coupled ligase reaction, activating hydrogencarbonate by forming carboxy phosphate which reacts with ammonia to form carbamoyl phosphate. This chain is Carbamoyl phosphate synthase large chain, found in Enterococcus faecalis (strain ATCC 700802 / V583).